The sequence spans 147 residues: Acidic phospholipase A2 S7-48J (147 aa).

Positions 1–19 (MYPAHLLVLLAVCVSLLGA) are cleaved as a signal peptide. Residues 20–27 (SDIPPQPL) constitute a propeptide that is removed on maturation. Cystine bridges form between Cys38–Cys99, Cys54–Cys146, Cys56–Cys72, Cys71–Cys127, Cys78–Cys120, Cys88–Cys113, and Cys106–Cys118. Residues Tyr55, Gly57, and Gly59 each coordinate Ca(2+). His75 is an active-site residue. Asp76 provides a ligand contact to Ca(2+). Residue Asp121 is part of the active site.

Belongs to the phospholipase A2 family. Group I subfamily. D49 sub-subfamily. It depends on Ca(2+) as a cofactor. In terms of tissue distribution, expressed by the venom gland.

The protein localises to the secreted. It catalyses the reaction a 1,2-diacyl-sn-glycero-3-phosphocholine + H2O = a 1-acyl-sn-glycero-3-phosphocholine + a fatty acid + H(+). Functionally, snake venom phospholipase A2 (PLA2) that inhibits collagen-induced platelet aggregation. PLA2 catalyzes the calcium-dependent hydrolysis of the 2-acyl groups in 3-sn-phosphoglycerides. In Austrelaps superbus (Lowland copperhead snake), this protein is Acidic phospholipase A2 S7-48J.